We begin with the raw amino-acid sequence, 282 residues long: Energy-coupling factor transporter ATP-binding protein EcfA2 (282 aa).

An ABC transporter domain is found at 1 to 234 (MKGSPFEKVA…ADELVALGLD (234 aa)). Residue 28-35 (GHTGSGKS) coordinates ATP.

This sequence belongs to the ABC transporter superfamily. Energy-coupling factor EcfA family. In terms of assembly, forms a stable energy-coupling factor (ECF) transporter complex composed of 2 membrane-embedded substrate-binding proteins (S component), 2 ATP-binding proteins (A component) and 2 transmembrane proteins (T component).

The protein resides in the cell membrane. Its function is as follows. ATP-binding (A) component of a common energy-coupling factor (ECF) ABC-transporter complex. Unlike classic ABC transporters this ECF transporter provides the energy necessary to transport a number of different substrates. The protein is Energy-coupling factor transporter ATP-binding protein EcfA2 of Halalkalibacterium halodurans (strain ATCC BAA-125 / DSM 18197 / FERM 7344 / JCM 9153 / C-125) (Bacillus halodurans).